Consider the following 194-residue polypeptide: ATP-dependent Clp protease proteolytic subunit (194 aa).

The Nucleophile role is filled by S98. H123 is a catalytic residue.

It belongs to the peptidase S14 family. As to quaternary structure, fourteen ClpP subunits assemble into 2 heptameric rings which stack back to back to give a disk-like structure with a central cavity, resembling the structure of eukaryotic proteasomes.

It localises to the cytoplasm. It carries out the reaction Hydrolysis of proteins to small peptides in the presence of ATP and magnesium. alpha-casein is the usual test substrate. In the absence of ATP, only oligopeptides shorter than five residues are hydrolyzed (such as succinyl-Leu-Tyr-|-NHMec, and Leu-Tyr-Leu-|-Tyr-Trp, in which cleavage of the -Tyr-|-Leu- and -Tyr-|-Trp bonds also occurs).. In terms of biological role, cleaves peptides in various proteins in a process that requires ATP hydrolysis. Has a chymotrypsin-like activity. Plays a major role in the degradation of misfolded proteins. This is ATP-dependent Clp protease proteolytic subunit from Syntrophotalea carbinolica (strain DSM 2380 / NBRC 103641 / GraBd1) (Pelobacter carbinolicus).